We begin with the raw amino-acid sequence, 356 residues long: Histidinol-phosphate aminotransferase 1 (356 aa).

The residue at position 213 (Lys213) is an N6-(pyridoxal phosphate)lysine.

The protein belongs to the class-II pyridoxal-phosphate-dependent aminotransferase family. Histidinol-phosphate aminotransferase subfamily. In terms of assembly, homodimer. Pyridoxal 5'-phosphate is required as a cofactor.

It catalyses the reaction L-histidinol phosphate + 2-oxoglutarate = 3-(imidazol-4-yl)-2-oxopropyl phosphate + L-glutamate. Its pathway is amino-acid biosynthesis; L-histidine biosynthesis; L-histidine from 5-phospho-alpha-D-ribose 1-diphosphate: step 7/9. In Burkholderia pseudomallei (strain K96243), this protein is Histidinol-phosphate aminotransferase 1.